The primary structure comprises 418 residues: D-inositol 3-phosphate glycosyltransferase 1 (418 aa).

UDP-N-acetyl-alpha-D-glucosamine-binding positions include 24-25 (QP) and Gly32. 1D-myo-inositol 3-phosphate contacts are provided by residues 29–34 (DAGGLN), Lys87, His115, Ser139, and Gln159. UDP-N-acetyl-alpha-D-glucosamine is bound by residues Arg233 and Lys238. Residues Tyr308, Arg309, and Ala311 each coordinate Mg(2+). UDP-N-acetyl-alpha-D-glucosamine-binding residues include Glu321 and Glu329. Residue Thr335 participates in Mg(2+) binding.

The protein belongs to the glycosyltransferase group 1 family. MshA subfamily. In terms of assembly, homodimer.

The enzyme catalyses 1D-myo-inositol 3-phosphate + UDP-N-acetyl-alpha-D-glucosamine = 1D-myo-inositol 2-acetamido-2-deoxy-alpha-D-glucopyranoside 3-phosphate + UDP + H(+). Its function is as follows. Catalyzes the transfer of a N-acetyl-glucosamine moiety to 1D-myo-inositol 3-phosphate to produce 1D-myo-inositol 2-acetamido-2-deoxy-glucopyranoside 3-phosphate in the mycothiol biosynthesis pathway. This Catenulispora acidiphila (strain DSM 44928 / JCM 14897 / NBRC 102108 / NRRL B-24433 / ID139908) protein is D-inositol 3-phosphate glycosyltransferase 1.